The primary structure comprises 85 residues: UPF0297 protein CD630_12830 (85 aa).

This sequence belongs to the UPF0297 family.

The protein is UPF0297 protein CD630_12830 of Clostridioides difficile (strain 630) (Peptoclostridium difficile).